The sequence spans 362 residues: Protein Wnt-16 (362 aa).

The signal sequence occupies residues 1–29; that stretch reads MDRAALLGLSRLCALWAAVLALFPCGAQG. 3 disulfides stabilise this stretch: cysteine 81-cysteine 92, cysteine 136-cysteine 144, and cysteine 146-cysteine 165. An N-linked (GlcNAc...) asparagine glycan is attached at asparagine 140. Asparagine 186 carries an N-linked (GlcNAc...) asparagine glycan. 8 disulfide bridges follow: cysteine 218–cysteine 232, cysteine 220–cysteine 227, cysteine 291–cysteine 322, cysteine 307–cysteine 317, cysteine 321–cysteine 361, cysteine 337–cysteine 352, cysteine 339–cysteine 349, and cysteine 344–cysteine 345. Serine 224 is lipidated: O-palmitoleoyl serine; by PORCN. Asparagine 308 carries N-linked (GlcNAc...) asparagine glycosylation.

The protein belongs to the Wnt family. Post-translationally, palmitoleoylation is required for efficient binding to frizzled receptors. Depalmitoleoylation leads to Wnt signaling pathway inhibition.

It is found in the secreted. Its subcellular location is the extracellular space. It localises to the extracellular matrix. Its function is as follows. Ligand for members of the frizzled family of seven transmembrane receptors. Probable developmental protein. May be a signaling molecule which affects the development of discrete regions of tissues. Is likely to signal over only few cell diameters. This is Protein Wnt-16 (WNT16) from Bos taurus (Bovine).